Here is a 751-residue protein sequence, read N- to C-terminus: CCR4-NOT transcription complex subunit 3 (751 aa).

Positions 240–534 are disordered; it reads ATSPPSHSHM…QFSTTPEIKA (295 aa). A compositionally biased stretch (low complexity) spans 257–268; that stretch reads SSSTPTSTTSSS. The span at 284–293 shows a compositional bias: basic and acidic residues; that stretch reads DDKKRGRSTD. Threonine 292 is modified (phosphothreonine). A compositionally biased stretch (polar residues) spans 294-315; the sequence is SEVSQSPAKNGSKPVHSNQHPQ. Serine 299 bears the Phosphoserine mark. The segment covering 317 to 330 has biased composition (pro residues); sequence PAVPPTYPSGPPPT. Residues 339 to 348 show a composition bias toward polar residues; that stretch reads GNNGASTPAA. Over residues 441–450 the composition is skewed to low complexity; that stretch reads SSSGGSSASS. Over residues 463–472 the composition is skewed to polar residues; sequence APSTSKESST. Over residues 473–498 the composition is skewed to low complexity; the sequence is AAPSGAGNVASGSGNNSGGPSLLVPL. Phosphoserine is present on serine 540. Residues 659–751 are repressor domain; sequence EFYQRLSTET…YRYLEDRDLQ (93 aa).

Belongs to the CNOT2/3/5 family. In terms of assembly, component of the CCR4-NOT complex; distinct complexes seem to exist that differ in the participation of probably mutually exclusive catalytic subunits. In the complex interacts directly with CNOT2. Interacts with TIP120B and NANOS2. Interacts with EBF1. Interacts in an RNA-independent manner with BICC1 (via KH domains).

The protein resides in the nucleus. The protein localises to the cytoplasm. It localises to the P-body. Component of the CCR4-NOT complex which is one of the major cellular mRNA deadenylases and is linked to various cellular processes including bulk mRNA degradation, miRNA-mediated repression, translational repression during translational initiation and general transcription regulation. Additional complex functions may be a consequence of its influence on mRNA expression. May be involved in metabolic regulation; may be involved in recruitment of the CCR4-NOT complex to deadenylation target mRNAs involved in energy metabolism. Involved in mitotic progression and regulation of the spindle assembly checkpoint by regulating the stability of MAD1L1 mRNA. Can repress transcription and may link the CCR4-NOT complex to transcriptional regulation; the repressive function may involve histone deacetylases. Involved in the maintenance of embryonic stem (ES) cell identity; prevents their differentiation towards extraembryonic trophectoderm lineages. This chain is CCR4-NOT transcription complex subunit 3 (Cnot3), found in Mus musculus (Mouse).